Consider the following 85-residue polypeptide: Photosystem I reaction center subunit PsaK (85 aa).

A run of 2 helical transmembrane segments spans residues V13–I33 and G59–L79.

This sequence belongs to the PsaG/PsaK family.

It localises to the cellular thylakoid membrane. This is Photosystem I reaction center subunit PsaK from Synechococcus sp. (strain WH7803).